Reading from the N-terminus, the 428-residue chain is Histone deacetylase 3 (428 aa).

Residues Lys-3 to Glu-316 are histone deacetylase. 1D-myo-inositol 1,4,5,6-tetrakisphosphate-binding residues include His-17, Gly-21, and Lys-25. Residue His-135 is part of the active site. Zn(2+) is bound by residues Asp-170, His-172, and Asp-259. Arg-265 serves as a coordination point for 1D-myo-inositol 1,4,5,6-tetrakisphosphate. Basic and acidic residues-rich tracts occupy residues Asp-388 to Ser-405 and Asp-415 to Ile-428. Positions Asp-388–Ile-428 are disordered. Residue Ser-424 is modified to Phosphoserine.

The protein belongs to the histone deacetylase family. HD type 1 subfamily. In terms of assembly, interacts with HDAC7 and HDAC9. Interacts with HDAC10, DAXX and DACH1. Found in a complex with NCOR1 and NCOR2. Component of the N-Cor repressor complex, at least composed of NCOR1, NCOR2, HDAC3, TBL1X, TBL1R, CORO2A and GPS2. Interacts with BCOR, MJD2A/JHDM3A, NRIP1, PRDM6 and SRY. Interacts with BTBD14B. Interacts with GLIS2. Interacts (via the DNA-binding domain) with NR2C1; the interaction recruits phosphorylated NR2C1 to PML bodies for sumoylation. Component of the Notch corepressor complex. Interacts with CBFA2T3 and NKAP. Interacts with APEX1; the interaction is not dependent on the acetylated status of APEX1. Interacts with and deacetylates MAPK14. Interacts with ZMYND15. Interacts with SMRT/NCOR2 and BCL6 on DNA enhancer elements. Interacts with INSM1. Interacts with XBP1; the interaction occurs in endothelial cell (EC) under disturbed flow. Interacts (via C-terminus) with CCAR2 (via N-terminus). Interacts with and deacetylates MEF2D. Interacts with BEND3. Interacts with NKAPL. Interacts with DHX36; this interaction occurs in a RNA-dependent manner. Interacts weakly with CRY1; this interaction is enhanced in the presence of FBXL3. Interacts with FBXL3 and BMAL1. Interacts with NCOR1. Interacts with RARA. Interacts with SETD5. Deubiquitinated on 'Lys-63'-linked ubiquitin chains by USP38; leading to a decreased level of histone acetylation. Post-translationally, sumoylated in vitro.

It localises to the nucleus. Its subcellular location is the chromosome. The protein localises to the cytoplasm. It is found in the cytosol. The enzyme catalyses N(6)-acetyl-L-lysyl-[histone] + H2O = L-lysyl-[histone] + acetate. It catalyses the reaction N(6)-acetyl-L-lysyl-[protein] + H2O = L-lysyl-[protein] + acetate. It carries out the reaction N(6)-(2E)-butenoyl-L-lysyl-[protein] + H2O = (2E)-2-butenoate + L-lysyl-[protein]. The catalysed reaction is N(6)-(2-hydroxyisobutanoyl)-L-lysyl-[protein] + H2O = 2-hydroxy-2-methylpropanoate + L-lysyl-[protein]. The enzyme catalyses N(6)-[(S)-lactoyl]-L-lysyl-[protein] + H2O = (S)-lactate + L-lysyl-[protein]. Inositol tetraphosphate (1D-myo-inositol 1,4,5,6-tetrakisphosphate) promotes the histone deacetylase activity by acting as an intermolecular glue between HDAC3 and NCOR2, thereby promoting its association with the N-Cor complex, a prerequisite for the histone deacetylase activity. Histone deacetylase that catalyzes the deacetylation of lysine residues on the N-terminal part of the core histones (H2A, H2B, H3 and H4), and some other non-histone substrates. Histone deacetylation gives a tag for epigenetic repression and plays an important role in transcriptional regulation, cell cycle progression and developmental events. Histone deacetylases act via the formation of large multiprotein complexes, such as N-Cor repressor complex, which activate the histone deacetylase activity. Participates in the BCL6 transcriptional repressor activity by deacetylating the H3 'Lys-27' (H3K27) on enhancer elements, antagonizing EP300 acetyltransferase activity and repressing proximal gene expression. Acts as a molecular chaperone for shuttling phosphorylated NR2C1 to PML bodies for sumoylation. Contributes, together with XBP1 isoform 1, to the activation of NFE2L2-mediated HMOX1 transcription factor gene expression in a PI(3)K/mTORC2/Akt-dependent signaling pathway leading to endothelial cell (EC) survival under disturbed flow/oxidative stress. Regulates both the transcriptional activation and repression phases of the circadian clock in a deacetylase activity-independent manner. During the activation phase, promotes the accumulation of ubiquitinated BMAL1 at the E-boxes and during the repression phase, blocks FBXL3-mediated CRY1/2 ubiquitination and promotes the interaction of CRY1 and BMAL1. The NCOR1-HDAC3 complex regulates the circadian expression of the core clock gene BMAL1 and the genes involved in lipid metabolism in the liver. Also functions as a deacetylase for non-histone targets, such as KAT5, MEF2D, MAPK14, RARA and STAT3. Serves as a corepressor of RARA, mediating its deacetylation and repression, leading to inhibition of RARE DNA element binding. In association with RARA, plays a role in the repression of microRNA-10a and thereby in the inflammatory response. In addition to protein deacetylase activity, also acts as a protein-lysine deacylase by recognizing other acyl groups: catalyzes removal of (2E)-butenoyl (crotonyl), lactoyl (lactyl) and 2-hydroxyisobutanoyl (2-hydroxyisobutyryl) acyl groups from lysine residues, leading to protein decrotonylation, delactylation and de-2-hydroxyisobutyrylation, respectively. Catalyzes decrotonylation of MAPRE1/EB1. Mediates delactylation NBN/NBS1, thereby inhibiting DNA double-strand breaks (DSBs) via homologous recombination (HR). The sequence is that of Histone deacetylase 3 (HDAC3) from Pongo abelii (Sumatran orangutan).